Here is a 213-residue protein sequence, read N- to C-terminus: Kiwellin (213 aa).

The signal sequence occupies residues 1 to 24 (MAQLALLLLSLFLTLISLAPPGAS). 3 cysteine pairs are disulfide-bonded: cysteine 28–cysteine 60, cysteine 32–cysteine 44, and cysteine 38–cysteine 49. Proline 65 and proline 67 each carry 4-hydroxyproline. 4 disulfides stabilise this stretch: cysteine 72–cysteine 90, cysteine 80–cysteine 172, cysteine 119–cysteine 144, and cysteine 166–cysteine 172. The disordered stretch occupies residues 91–121 (SPPVTSSTPAKLTNNDFSEGGDDGGPSECDE). Over residues 93-107 (PVTSSTPAKLTNNDF) the composition is skewed to polar residues.

It belongs to the kiwellin family. Post-translationally, undergoes proteolytic cleavage by actinidin to produce kissper and KiTH. Three forms of KiTH are produced by cleavage at different sites, the main form produced in vivo is KiTH-1.

The protein localises to the secreted. Its function is as follows. pH-dependent, voltage-gated and anion-selective pore-forming peptide. The chain is Kiwellin from Actinidia deliciosa (Kiwi).